We begin with the raw amino-acid sequence, 794 residues long: Protocadherin beta-6 (794 aa).

The N-terminal stretch at Met1 to Ser27 is a signal peptide. At Glu28–Leu688 the chain is on the extracellular side. 5 Cadherin domains span residues Val34–Phe132, Met137–Phe241, Tyr246–Leu345, Phe350–Phe449, and Tyr454–Val559. Asn46 carries an N-linked (GlcNAc...) asparagine glycan. A disulfide bridge connects residues Cys95 and Cys101. Asn183 is a glycosylation site (N-linked (GlcNAc...) asparagine). Asn416 carries an N-linked (GlcNAc...) asparagine glycan. Asn565 is a glycosylation site (N-linked (GlcNAc...) asparagine). The Cadherin 6 domain occupies Gly566 to Leu669. A helical transmembrane segment spans residues Val689–Val709. The Cytoplasmic segment spans residues Arg710–Ser794. Residues Pro773–Ser794 form a disordered region. Positions Thr784 to Ser794 are enriched in polar residues.

As to quaternary structure, forms homodimers in trans (molecules expressed by two different cells). Forms promiscuous heterodimers in cis (at the plasma membrane of the same cell) with other protocadherins.

Its subcellular location is the cell membrane. In terms of biological role, calcium-dependent cell-adhesion protein involved in cells self-recognition and non-self discrimination. Thereby, it is involved in the establishment and maintenance of specific neuronal connections in the brain. The protein is Protocadherin beta-6 of Pan troglodytes (Chimpanzee).